Here is a 395-residue protein sequence, read N- to C-terminus: ATP phosphoribosyltransferase regulatory subunit (395 aa).

This sequence belongs to the class-II aminoacyl-tRNA synthetase family. HisZ subfamily. As to quaternary structure, heteromultimer composed of HisG and HisZ subunits.

The protein localises to the cytoplasm. It functions in the pathway amino-acid biosynthesis; L-histidine biosynthesis; L-histidine from 5-phospho-alpha-D-ribose 1-diphosphate: step 1/9. Its function is as follows. Required for the first step of histidine biosynthesis. May allow the feedback regulation of ATP phosphoribosyltransferase activity by histidine. This chain is ATP phosphoribosyltransferase regulatory subunit, found in Pseudomonas fluorescens (strain ATCC BAA-477 / NRRL B-23932 / Pf-5).